We begin with the raw amino-acid sequence, 280 residues long: Phosphatidylserine decarboxylase proenzyme (280 aa).

Catalysis depends on charge relay system; for autoendoproteolytic cleavage activity residues Asp-90, His-146, and Ser-247. Ser-247 serves as the catalytic Schiff-base intermediate with substrate; via pyruvic acid; for decarboxylase activity. The residue at position 247 (Ser-247) is a Pyruvic acid (Ser); by autocatalysis.

Belongs to the phosphatidylserine decarboxylase family. PSD-B subfamily. Prokaryotic type I sub-subfamily. In terms of assembly, heterodimer of a large membrane-associated beta subunit and a small pyruvoyl-containing alpha subunit. It depends on pyruvate as a cofactor. In terms of processing, is synthesized initially as an inactive proenzyme. Formation of the active enzyme involves a self-maturation process in which the active site pyruvoyl group is generated from an internal serine residue via an autocatalytic post-translational modification. Two non-identical subunits are generated from the proenzyme in this reaction, and the pyruvate is formed at the N-terminus of the alpha chain, which is derived from the carboxyl end of the proenzyme. The autoendoproteolytic cleavage occurs by a canonical serine protease mechanism, in which the side chain hydroxyl group of the serine supplies its oxygen atom to form the C-terminus of the beta chain, while the remainder of the serine residue undergoes an oxidative deamination to produce ammonia and the pyruvoyl prosthetic group on the alpha chain. During this reaction, the Ser that is part of the protease active site of the proenzyme becomes the pyruvoyl prosthetic group, which constitutes an essential element of the active site of the mature decarboxylase.

The protein localises to the cell membrane. The catalysed reaction is a 1,2-diacyl-sn-glycero-3-phospho-L-serine + H(+) = a 1,2-diacyl-sn-glycero-3-phosphoethanolamine + CO2. It participates in phospholipid metabolism; phosphatidylethanolamine biosynthesis; phosphatidylethanolamine from CDP-diacylglycerol: step 2/2. In terms of biological role, catalyzes the formation of phosphatidylethanolamine (PtdEtn) from phosphatidylserine (PtdSer). This Myxococcus xanthus (strain DK1622) protein is Phosphatidylserine decarboxylase proenzyme.